The chain runs to 188 residues: Putative manganese efflux pump MntP (188 aa).

Transmembrane regions (helical) follow at residues 3–23 (MITLFGLALALAMDAFAVALG), 39–59 (LGWHFGLFQAMMPIIGWLAGL), 65–85 (IETYDHWVAFGLLVCVGGKMI), 104–124 (GMSLIMLSVATSIDALAVGLS), 125–145 (LAIVGISVWFPALIIGIIAGV), and 167–187 (IAGGLILIGIGLKILWEHTLG).

The protein belongs to the MntP (TC 9.B.29) family.

It localises to the cell inner membrane. Its function is as follows. Probably functions as a manganese efflux pump. This is Putative manganese efflux pump MntP from Syntrophotalea carbinolica (strain DSM 2380 / NBRC 103641 / GraBd1) (Pelobacter carbinolicus).